The primary structure comprises 575 residues: 2-succinyl-5-enolpyruvyl-6-hydroxy-3-cyclohexene-1-carboxylate synthase (575 aa).

It belongs to the TPP enzyme family. MenD subfamily. Homodimer. Requires Mg(2+) as cofactor. Mn(2+) is required as a cofactor. It depends on thiamine diphosphate as a cofactor.

The catalysed reaction is isochorismate + 2-oxoglutarate + H(+) = 5-enolpyruvoyl-6-hydroxy-2-succinyl-cyclohex-3-ene-1-carboxylate + CO2. Its pathway is quinol/quinone metabolism; 1,4-dihydroxy-2-naphthoate biosynthesis; 1,4-dihydroxy-2-naphthoate from chorismate: step 2/7. It participates in quinol/quinone metabolism; menaquinone biosynthesis. Catalyzes the thiamine diphosphate-dependent decarboxylation of 2-oxoglutarate and the subsequent addition of the resulting succinic semialdehyde-thiamine pyrophosphate anion to isochorismate to yield 2-succinyl-5-enolpyruvyl-6-hydroxy-3-cyclohexene-1-carboxylate (SEPHCHC). In Syntrophus aciditrophicus (strain SB), this protein is 2-succinyl-5-enolpyruvyl-6-hydroxy-3-cyclohexene-1-carboxylate synthase.